Reading from the N-terminus, the 361-residue chain is Probable cadicidin biosynthesis thioesterase (361 aa).

The 4Fe-4S ferredoxin-type domain maps to 2-29 (RVTVDSEQCVGAGQCVLNAPEVFDQDDD). The interval 36–110 (RADPTSGTTR…RRDSPVTTAD (75 aa)) is disordered. Residues 46–61 (RSARRATCARRPRSSS) show a composition bias toward basic residues. Basic and acidic residues-rich tracts occupy residues 62–74 (RRTE…DRHR) and 94–104 (TDRRQNHRRDS). S201 is a catalytic residue.

It belongs to the thioesterase family.

It participates in antibiotic biosynthesis; candicidin biosynthesis. Functionally, probable thioesterase involved in the biosynthesis of candicidin. Could release the macrolide ring from the polyketide synthase. In Streptomyces griseus, this protein is Probable cadicidin biosynthesis thioesterase.